A 142-amino-acid polypeptide reads, in one-letter code: Hemoglobin anodic subunit alpha (142 aa).

Ser-1 is modified (N-acetylserine). A Globin domain is found at 1–142 (SLSTKDKAVV…LALALADRYR (142 aa)). Residue His-59 coordinates O2. His-88 is a heme b binding site.

The protein belongs to the globin family. In terms of assembly, heterotetramer of two alpha chains and two beta chains. In terms of tissue distribution, red blood cells.

Its function is as follows. Involved in oxygen transport from gills to the various peripheral tissues. The protein is Hemoglobin anodic subunit alpha of Gymnothorax unicolor (Brown moray).